The sequence spans 44 residues: Photosystem I reaction center subunit IX (44 aa).

Residues 7-27 traverse the membrane as a helical segment; it reads YLSVAPVVSTLWFAALAGLLI.

It belongs to the PsaJ family.

It localises to the plastid. The protein resides in the chloroplast thylakoid membrane. Its function is as follows. May help in the organization of the PsaE and PsaF subunits. This is Photosystem I reaction center subunit IX from Lotus japonicus (Lotus corniculatus var. japonicus).